Reading from the N-terminus, the 321-residue chain is Fructose-1,6-bisphosphatase 2 class 2 (321 aa).

Mn(2+) is bound by residues Asp32, Glu56, Asp84, and Glu87. Substrate is bound by residues 87-89 (EGT), Tyr118, 163-165 (KPR), 185-187 (DGD), and Gly209. Residue Glu212 coordinates Mn(2+).

The protein belongs to the FBPase class 2 family. As to quaternary structure, homodimer. Requires Mn(2+) as cofactor.

The catalysed reaction is beta-D-fructose 1,6-bisphosphate + H2O = beta-D-fructose 6-phosphate + phosphate. With respect to regulation, competitively inhibited by low concentrations of phosphate (IC50 of 1.2 mM) and is also sensitive to Li(+) (IC50 of 15.8 mM). Also inhibited by 1 mM ATP or 50 mM KCl (60% and 20% residual activity, respectively). Slightly activated (40-50%) by the addition of 1 mM dithiothreitol in vitro. Functionally, catalyzes the hydrolysis of fructose 1,6-bisphosphate to fructose 6-phosphate. Also displays a low activity toward glucose 1,6-bisphosphate, and no activity against ribulose 1,5-bisphosphate, fructose 2,6-bisphosphate, or fructose 1-phosphate. The sequence is that of Fructose-1,6-bisphosphatase 2 class 2 (yggF) from Escherichia coli (strain K12).